The following is a 253-amino-acid chain: Solute carrier family 66 member 2 (253 aa).

Helical transmembrane passes span 7 to 27, 49 to 69, 72 to 92, 125 to 145, 150 to 170, and 214 to 234; these read GWLL…AMVF, FSTY…LFWF, HFES…LLML, FADY…ITYL, ALFV…LGVP, and VCGL…YVFT. A PQ-loop 1 domain is found at 14–80; that stretch reads HQLVSWGAAG…RHFESPLLWQ (67 aa). The PQ-loop 2 domain maps to 160–215; it reads AVLTEAMLGVPQLYRNHRHQSTEGMSIKMVLMWTSGDTFKTAYFLLNGAPLQFSVC.

The protein localises to the membrane. The polypeptide is Solute carrier family 66 member 2 (SLC66A2) (Bos taurus (Bovine)).